The sequence spans 675 residues: DNA ligase (675 aa).

Residues 34–38 (DYAFD), 83–84 (SL), and Glu-117 contribute to the NAD(+) site. Lys-119 serves as the catalytic N6-AMP-lysine intermediate. NAD(+) contacts are provided by Arg-140, Glu-184, Lys-297, and Lys-321. Positions 415, 418, 433, and 439 each coordinate Zn(2+). Residues 598–675 (LVNRNFEGMK…GEEEFEAMLF (78 aa)) form the BRCT domain.

The protein belongs to the NAD-dependent DNA ligase family. LigA subfamily. Requires Mg(2+) as cofactor. Mn(2+) serves as cofactor.

It catalyses the reaction NAD(+) + (deoxyribonucleotide)n-3'-hydroxyl + 5'-phospho-(deoxyribonucleotide)m = (deoxyribonucleotide)n+m + AMP + beta-nicotinamide D-nucleotide.. In terms of biological role, DNA ligase that catalyzes the formation of phosphodiester linkages between 5'-phosphoryl and 3'-hydroxyl groups in double-stranded DNA using NAD as a coenzyme and as the energy source for the reaction. It is essential for DNA replication and repair of damaged DNA. This is DNA ligase from Prosthecochloris aestuarii (strain DSM 271 / SK 413).